A 282-amino-acid chain; its full sequence is MALVLILQLLTLWPLCHTDITPSVPPASYHPKPWLGAQPATVVTPGVNVTLRCRAPQPAWRFGLFKPGEIAPLLFRDVSSELAEFFLEEVTPAQGGIYRCCYRRPDWGPGVWSQPSDVLELLVTEELPRPSLVALPGPVVGPGANVSLRCAGRLRNMSFVLYREGVAAPLQYRHSAQPWADFTLLGARAPGTYSCYYHTPSAPYVLSQRSEVLVISWEGEGPEARPASSAPGMQAPGPPPSDPGAQAPSLSSFRPRGLVLQPLLPQTQDSWDPAPPPSDPGV.

Positions 1-18 (MALVLILQLLTLWPLCHT) are cleaved as a signal peptide. 2 Ig-like domains span residues 22-116 (PSVP…SQPS) and 126-219 (ELPR…SWEG). Asparagine 48 carries an N-linked (GlcNAc...) asparagine glycan. Cysteine 53 and cysteine 100 are disulfide-bonded. Asparagine 145 is a glycosylation site (N-linked (GlcNAc...) asparagine). Residues 221–282 (GPEARPASSA…PAPPPSDPGV (62 aa)) are disordered. A compositionally biased stretch (pro residues) spans 273 to 282 (PAPPPSDPGV).

Belongs to the leukocyte receptor complex/polymeric immunoglobulin receptor (PIR/LRC) family.

The protein resides in the secreted. It is found in the cell membrane. In terms of biological role, regulator of osteoclastogenesis which plays an important bone-specific function in osteoclast differentiation. The protein is Osteoclast-associated immunoglobulin-like receptor (OSCAR) of Homo sapiens (Human).